A 438-amino-acid polypeptide reads, in one-letter code: 5-methylthioadenosine/S-adenosylhomocysteine deaminase (438 aa).

His-66 and His-68 together coordinate Zn(2+). Positions 95, 148, and 188 each coordinate substrate. His-215 lines the Zn(2+) pocket. Substrate is bound by residues Glu-218 and Asp-305. Zn(2+) is bound at residue Asp-305.

It belongs to the metallo-dependent hydrolases superfamily. MTA/SAH deaminase family. Zn(2+) serves as cofactor.

It carries out the reaction S-adenosyl-L-homocysteine + H2O + H(+) = S-inosyl-L-homocysteine + NH4(+). The enzyme catalyses S-methyl-5'-thioadenosine + H2O + H(+) = S-methyl-5'-thioinosine + NH4(+). Catalyzes the deamination of 5-methylthioadenosine and S-adenosyl-L-homocysteine into 5-methylthioinosine and S-inosyl-L-homocysteine, respectively. Is also able to deaminate adenosine. The polypeptide is 5-methylthioadenosine/S-adenosylhomocysteine deaminase (Halalkalibacterium halodurans (strain ATCC BAA-125 / DSM 18197 / FERM 7344 / JCM 9153 / C-125) (Bacillus halodurans)).